A 232-amino-acid chain; its full sequence is uncharacterized protein (232 aa).

It is found in the cytoplasm. It localises to the nucleus. This is an uncharacterized protein from Saccharomyces cerevisiae (strain ATCC 204508 / S288c) (Baker's yeast).